A 902-amino-acid chain; its full sequence is Probable leucine--tRNA ligase, mitochondrial (902 aa).

Lys67 is subject to N6-acetyllysine. Residues 91-101 carry the 'HIGH' region motif; that stretch reads YPSGKLHMGHV. N6-acetyllysine is present on Lys235. The 'KMSKS' region motif lies at 638 to 642; sequence KMSKS. ATP is bound at residue Lys641.

It belongs to the class-I aminoacyl-tRNA synthetase family.

The protein localises to the mitochondrion matrix. It catalyses the reaction tRNA(Leu) + L-leucine + ATP = L-leucyl-tRNA(Leu) + AMP + diphosphate. This is Probable leucine--tRNA ligase, mitochondrial (Lars2) from Mus musculus (Mouse).